Here is a 417-residue protein sequence, read N- to C-terminus: NADH-quinone oxidoreductase subunit D (417 aa).

It belongs to the complex I 49 kDa subunit family. In terms of assembly, NDH-1 is composed of 14 different subunits. Subunits NuoB, C, D, E, F, and G constitute the peripheral sector of the complex.

Its subcellular location is the cell inner membrane. It catalyses the reaction a quinone + NADH + 5 H(+)(in) = a quinol + NAD(+) + 4 H(+)(out). Functionally, NDH-1 shuttles electrons from NADH, via FMN and iron-sulfur (Fe-S) centers, to quinones in the respiratory chain. The immediate electron acceptor for the enzyme in this species is believed to be ubiquinone. Couples the redox reaction to proton translocation (for every two electrons transferred, four hydrogen ions are translocated across the cytoplasmic membrane), and thus conserves the redox energy in a proton gradient. The sequence is that of NADH-quinone oxidoreductase subunit D from Ralstonia pickettii (strain 12J).